A 159-amino-acid chain; its full sequence is Protein hunchback (159 aa).

Residues 18-34 (HNHHHHHHHGHHQHQQR) show a composition bias toward basic residues. 2 disordered regions span residues 18–49 (HNHHHHHHHGHHQHQQRHNSNSNASSPHQSPL) and 119–159 (LTPP…KYMA). Positions 140–159 (EPEKEHDLMSNSSEDMKYMA) are enriched in basic and acidic residues.

Belongs to the hunchback C2H2-type zinc-finger protein family.

The protein localises to the nucleus. In terms of biological role, gap class segmentation protein that controls development of head structures. The polypeptide is Protein hunchback (hb) (Drosophila soonae (Fruit fly)).